The sequence spans 862 residues: Leucine--tRNA ligase (862 aa).

A 'HIGH' region motif is present at residues 51-61; that stretch reads PYPSGSLHMGH. A 'KMSKS' region motif is present at residues 624–628; it reads KMSKS. Lys-627 contributes to the ATP binding site.

The protein belongs to the class-I aminoacyl-tRNA synthetase family.

The protein resides in the cytoplasm. It catalyses the reaction tRNA(Leu) + L-leucine + ATP = L-leucyl-tRNA(Leu) + AMP + diphosphate. In Prochlorococcus marinus (strain NATL2A), this protein is Leucine--tRNA ligase.